Reading from the N-terminus, the 506-residue chain is Deoxyguanosinetriphosphate triphosphohydrolase (506 aa).

Residues 66–274 (RLTHSLEVQQ…MEAADDISYC (209 aa)) form the HD domain.

This sequence belongs to the dGTPase family. Type 1 subfamily. In terms of assembly, homotetramer. The cofactor is Mg(2+).

It carries out the reaction dGTP + H2O = 2'-deoxyguanosine + triphosphate + H(+). Its function is as follows. dGTPase preferentially hydrolyzes dGTP over the other canonical NTPs. The polypeptide is Deoxyguanosinetriphosphate triphosphohydrolase (Yersinia pestis bv. Antiqua (strain Antiqua)).